We begin with the raw amino-acid sequence, 181 residues long: TATA-box-binding protein (181 aa).

2 repeat units span residues 8–84 and 99–175.

It belongs to the TBP family.

General factor that plays a role in the activation of archaeal genes transcribed by RNA polymerase. Binds specifically to the TATA box promoter element which lies close to the position of transcription initiation. The chain is TATA-box-binding protein from Methanobrevibacter smithii (strain ATCC 35061 / DSM 861 / OCM 144 / PS).